The following is a 302-amino-acid chain: Pantothenate synthetase (302 aa).

Residue 30 to 37 (MGALHGGH) coordinates ATP. His37 (proton donor) is an active-site residue. Gln61 provides a ligand contact to (R)-pantoate. Residue Gln61 coordinates beta-alanine. 147 to 150 (GEKD) is a binding site for ATP. Residue Gln153 participates in (R)-pantoate binding. Residues Val176 and 184–187 (KSSR) each bind ATP.

This sequence belongs to the pantothenate synthetase family. Homodimer.

It localises to the cytoplasm. It carries out the reaction (R)-pantoate + beta-alanine + ATP = (R)-pantothenate + AMP + diphosphate + H(+). It participates in cofactor biosynthesis; (R)-pantothenate biosynthesis; (R)-pantothenate from (R)-pantoate and beta-alanine: step 1/1. Functionally, catalyzes the condensation of pantoate with beta-alanine in an ATP-dependent reaction via a pantoyl-adenylate intermediate. The protein is Pantothenate synthetase of Shouchella clausii (strain KSM-K16) (Alkalihalobacillus clausii).